A 483-amino-acid chain; its full sequence is Regulatory protein ViaA (483 aa).

This sequence belongs to the ViaA family. As to quaternary structure, homodimer. Interacts with RavA.

It localises to the cytoplasm. Component of the RavA-ViaA chaperone complex, which may act on the membrane to optimize the function of some of the respiratory chains. ViaA stimulates the ATPase activity of RavA. The polypeptide is Regulatory protein ViaA (Escherichia coli O7:K1 (strain IAI39 / ExPEC)).